A 724-amino-acid chain; its full sequence is Protein arginine N-methyltransferase 1.6 (724 aa).

2 SAM-dependent MTase PRMT-type domains span residues 61–388 and 395–721; these read NDQP…YNLK and HERT…IVTH. Active-site residues include Glu183 and Glu192.

It belongs to the class I-like SAM-binding methyltransferase superfamily. Protein arginine N-methyltransferase family. PRMT7 subfamily.

In terms of biological role, arginine methyltransferase that can both catalyze the formation of omega-N monomethylarginine (MMA) and symmetrical dimethylarginine (sDMA). This Arabidopsis thaliana (Mouse-ear cress) protein is Protein arginine N-methyltransferase 1.6 (PRMT16).